The chain runs to 779 residues: MNNKILEQLEFNKVKELLLPYLKTEQSQEELLELEPMTEAPKIEKSFNEISDMEQIFVEHHSFGIVSLSSISESLKRLELSADLNIQELLAIKKVLQSSSDMIHFYSDLDNVSFQSLDRLFENLEQFPNLQGSFQAINDGGFLEHFASPELERIRRQLTNSERRVRQILQDMLKEKAELLSENLIASRSGRSVLPVKNTYRNRISGVVHDISSSGSTVYIEPRAVVTLNEEITQLRADERHEEGRILHAFSDLLRPHVATIRNNAWILGHLDLVRAKYLFMSDNKATIPKISNDSTLALINVRHPLLSNPVANDLHFDHDLTAIVITGPNTGGKTIMLKTLGLAQLMGQSGLPVLADKGSKIAVFNNIFADIGDEQSIEQSLSTFSSHMTHIVSILNEADHNSLVLFDELGAGTDPQEGASLAMAILEHLRLSHIKTMATTHYPELKAYGIETNFVENASMEFDAETLSPTYRFMQGVPGRSNAFEIASRLGLAPFIVKQAKQMTDSDSDVNRIIEQLEAQTLETRRRLDHIKEVEQENLKFNRAVKKLYNEFSHERDKELEKIYQEAQEIVDMALNESDTILKKLNDKSQLKPHEIIDAKAQIKKLAPQVDLSKNKVLNKAKKIKAARAPRIGDDIIVTSYGQRGTLTSQLKDGRWEAQVGIIKMTLTHDEFTLVRVQEEQKVKNKQINVVKKADSSGPRARLDLRGKRYEEAMQELDHFIDQALLNNMGQVDIIHGIGTGVIREGVTKYLRRHKHVKHFAYAPQNAGGSGATIVTLG.

328 to 335 (GPNTGGKT) contacts ATP. Residues 704–779 (LDLRGKRYEE…GSGATIVTLG (76 aa)) enclose the Smr domain.

This sequence belongs to the DNA mismatch repair MutS family. MutS2 subfamily. As to quaternary structure, homodimer. Binds to stalled ribosomes, contacting rRNA.

In terms of biological role, endonuclease that is involved in the suppression of homologous recombination and thus may have a key role in the control of bacterial genetic diversity. Acts as a ribosome collision sensor, splitting the ribosome into its 2 subunits. Detects stalled/collided 70S ribosomes which it binds and splits by an ATP-hydrolysis driven conformational change. Acts upstream of the ribosome quality control system (RQC), a ribosome-associated complex that mediates the extraction of incompletely synthesized nascent chains from stalled ribosomes and their subsequent degradation. Probably generates substrates for RQC. The polypeptide is Endonuclease MutS2 (Streptococcus pyogenes serotype M18 (strain MGAS8232)).